We begin with the raw amino-acid sequence, 215 residues long: Phosphoribosylglycinamide formyltransferase (215 aa).

(6R)-10-formyltetrahydrofolate is bound by residues arginine 74, 99 to 102 (MRIL), and asparagine 116. Histidine 118 serves as the catalytic Proton donor.

The protein belongs to the GART family.

It catalyses the reaction N(1)-(5-phospho-beta-D-ribosyl)glycinamide + (6R)-10-formyltetrahydrofolate = N(2)-formyl-N(1)-(5-phospho-beta-D-ribosyl)glycinamide + (6S)-5,6,7,8-tetrahydrofolate + H(+). It functions in the pathway purine metabolism; IMP biosynthesis via de novo pathway; N(2)-formyl-N(1)-(5-phospho-D-ribosyl)glycinamide from N(1)-(5-phospho-D-ribosyl)glycinamide (10-formyl THF route): step 1/1. Functionally, catalyzes the transfer of a formyl group from 10-formyltetrahydrofolate to 5-phospho-ribosyl-glycinamide (GAR), producing 5-phospho-ribosyl-N-formylglycinamide (FGAR) and tetrahydrofolate. The sequence is that of Phosphoribosylglycinamide formyltransferase from Mycobacterium tuberculosis (strain CDC 1551 / Oshkosh).